The following is a 444-amino-acid chain: Methylenetetrahydrofolate--tRNA-(uracil-5-)-methyltransferase TrmFO (444 aa).

9-14 (GAGLAG) serves as a coordination point for FAD.

This sequence belongs to the MnmG family. TrmFO subfamily. FAD is required as a cofactor.

Its subcellular location is the cytoplasm. It catalyses the reaction uridine(54) in tRNA + (6R)-5,10-methylene-5,6,7,8-tetrahydrofolate + NADH + H(+) = 5-methyluridine(54) in tRNA + (6S)-5,6,7,8-tetrahydrofolate + NAD(+). It carries out the reaction uridine(54) in tRNA + (6R)-5,10-methylene-5,6,7,8-tetrahydrofolate + NADPH + H(+) = 5-methyluridine(54) in tRNA + (6S)-5,6,7,8-tetrahydrofolate + NADP(+). Functionally, catalyzes the folate-dependent formation of 5-methyl-uridine at position 54 (M-5-U54) in all tRNAs. This is Methylenetetrahydrofolate--tRNA-(uracil-5-)-methyltransferase TrmFO from Koribacter versatilis (strain Ellin345).